The sequence spans 715 residues: Epidermal growth factor receptor kinase substrate 8-like protein 2 (715 aa).

The region spanning 46 to 202 is the PID domain; the sequence is MHETSQYHVQ…RQRQSILPPP (157 aa). A disordered region spans residues 183 to 243; sequence QTLKGHQEKI…GFRRRESQEE (61 aa). The span at 199–208 shows a compositional bias: pro residues; sequence LPPPQGPAPI. Basic and acidic residues-rich tracts occupy residues 213–222 and 234–243; these read RGGDSPEAKN and GFRRRESQEE. Residue Ser240 is modified to Phosphoserine. Thr303 is subject to Phosphothreonine. The disordered stretch occupies residues 448 to 487; it reads VSPVSRQSIRNSQKHSPTSEPTPPGDALPPVSSPHTHRGY. A Phosphoserine modification is found at Ser449. The span at 451 to 466 shows a compositional bias: polar residues; that stretch reads VSRQSIRNSQKHSPTS. Thr469 carries the phosphothreonine modification. In terms of domain architecture, SH3 spans 492 to 551; the sequence is AMAKYVKILYDFTARNANELSVLKDEVLEVLEDGRQWWKLRSRSGQAGYVPCNILGEARP. Position 570 is a phosphoserine (Ser570).

The protein belongs to the EPS8 family. In terms of assembly, interacts with ABI1. Part of a complex that contains SOS1, ABI1 and EPS8L2. Associates with F-actin. Detected in fibroblasts and placenta.

The protein localises to the cytoplasm. Its subcellular location is the cell projection. It is found in the stereocilium. Its function is as follows. Stimulates guanine exchange activity of SOS1. May play a role in membrane ruffling and remodeling of the actin cytoskeleton. In the cochlea, is required for stereocilia maintenance in adult hair cells. The protein is Epidermal growth factor receptor kinase substrate 8-like protein 2 (EPS8L2) of Homo sapiens (Human).